A 200-amino-acid chain; its full sequence is Dephospho-CoA kinase (200 aa).

One can recognise a DPCK domain in the interval 2 to 200; sequence LIAVVGKAGV…CHHGHYQTPK (199 aa). An ATP-binding site is contributed by 10 to 15; it reads GVGKTT.

Belongs to the CoaE family.

Its subcellular location is the cytoplasm. The catalysed reaction is 3'-dephospho-CoA + ATP = ADP + CoA + H(+). It functions in the pathway cofactor biosynthesis; coenzyme A biosynthesis; CoA from (R)-pantothenate: step 5/5. Functionally, catalyzes the phosphorylation of the 3'-hydroxyl group of dephosphocoenzyme A to form coenzyme A. The polypeptide is Dephospho-CoA kinase (Mycoplasma pneumoniae (strain ATCC 29342 / M129 / Subtype 1) (Mycoplasmoides pneumoniae)).